Consider the following 154-residue polypeptide: tRNA (cytidine(34)-2'-O)-methyltransferase (154 aa).

4 residues coordinate S-adenosyl-L-methionine: leucine 78, glycine 100, isoleucine 122, and serine 130.

The protein belongs to the class IV-like SAM-binding methyltransferase superfamily. RNA methyltransferase TrmH family. TrmL subfamily. As to quaternary structure, homodimer.

The protein localises to the cytoplasm. The catalysed reaction is cytidine(34) in tRNA + S-adenosyl-L-methionine = 2'-O-methylcytidine(34) in tRNA + S-adenosyl-L-homocysteine + H(+). The enzyme catalyses 5-carboxymethylaminomethyluridine(34) in tRNA(Leu) + S-adenosyl-L-methionine = 5-carboxymethylaminomethyl-2'-O-methyluridine(34) in tRNA(Leu) + S-adenosyl-L-homocysteine + H(+). Methylates the ribose at the nucleotide 34 wobble position in the two leucyl isoacceptors tRNA(Leu)(CmAA) and tRNA(Leu)(cmnm5UmAA). Catalyzes the methyl transfer from S-adenosyl-L-methionine to the 2'-OH of the wobble nucleotide. The chain is tRNA (cytidine(34)-2'-O)-methyltransferase from Saccharophagus degradans (strain 2-40 / ATCC 43961 / DSM 17024).